The primary structure comprises 194 residues: GTP cyclohydrolase-2 (194 aa).

Position 50–54 (50–54 (RIHSE)) interacts with GTP. The Zn(2+) site is built by cysteine 55, cysteine 66, and cysteine 68. Residues 94–96 (EGR) and threonine 116 each bind GTP. Aspartate 128 (proton acceptor) is an active-site residue. Arginine 130 (nucleophile) is an active-site residue. 2 residues coordinate GTP: threonine 151 and lysine 156.

The protein belongs to the GTP cyclohydrolase II family. Zn(2+) serves as cofactor.

The enzyme catalyses GTP + 4 H2O = 2,5-diamino-6-hydroxy-4-(5-phosphoribosylamino)-pyrimidine + formate + 2 phosphate + 3 H(+). The protein operates within cofactor biosynthesis; riboflavin biosynthesis; 5-amino-6-(D-ribitylamino)uracil from GTP: step 1/4. Catalyzes the conversion of GTP to 2,5-diamino-6-ribosylamino-4(3H)-pyrimidinone 5'-phosphate (DARP), formate and pyrophosphate. The chain is GTP cyclohydrolase-2 from Helicobacter hepaticus (strain ATCC 51449 / 3B1).